Reading from the N-terminus, the 144-residue chain is Transcription antitermination protein NusB (144 aa).

This sequence belongs to the NusB family.

Involved in transcription antitermination. Required for transcription of ribosomal RNA (rRNA) genes. Binds specifically to the boxA antiterminator sequence of the ribosomal RNA (rrn) operons. This is Transcription antitermination protein NusB from Dictyoglomus thermophilum (strain ATCC 35947 / DSM 3960 / H-6-12).